The following is a 159-amino-acid chain: uncharacterized protein (159 aa).

In terms of domain architecture, HTH asnC-type spans 6 to 66 (LSKKDWEIIK…YLRFDKLGYT (61 aa)). A DNA-binding region (H-T-H motif) is located at residues 25 to 44 (DAEIGRRIGLSKSAVRWRRI).

This is an uncharacterized protein from Pyrococcus horikoshii (strain ATCC 700860 / DSM 12428 / JCM 9974 / NBRC 100139 / OT-3).